The chain runs to 248 residues: Small ribosomal subunit protein uS2 (248 aa).

It belongs to the universal ribosomal protein uS2 family.

The chain is Small ribosomal subunit protein uS2 from Janthinobacterium sp. (strain Marseille) (Minibacterium massiliensis).